The following is a 795-amino-acid chain: Putative replication origin-binding protein (795 aa).

A Helicase ATP-binding domain is found at 121-289; that stretch reads WLSNDKIKTL…DNFGKSIVVN (169 aa). An ATP-binding site is contributed by 134–141; sequence SPMGTGKT.

Belongs to the mimivirus R1 family.

Its function is as follows. Probably involved in DNA replication. May bind the genome origin of replication (ori). The protein is Putative replication origin-binding protein of Acanthamoeba polyphaga (Amoeba).